Reading from the N-terminus, the 671-residue chain is UvrABC system protein B (671 aa).

Residues 26-183 form the Helicase ATP-binding domain; that stretch reads EGLENGLAHQ…RRLSELQYSR (158 aa). Position 39 to 46 (39 to 46) interacts with ATP; the sequence is GVTGSGKT. Positions 92-115 match the Beta-hairpin motif; it reads YYDYYQPEAYVPSSDTFIEKDASV. A Helicase C-terminal domain is found at 431–593; that stretch reads QVDDLLSEIR…IIPQGLNKKI (163 aa). In terms of domain architecture, UVR spans 631 to 666; it reads DQKIRELEAKMYTYAQNLEFEQAAELRDQVHQLRQQ.

The protein belongs to the UvrB family. As to quaternary structure, forms a heterotetramer with UvrA during the search for lesions. Interacts with UvrC in an incision complex.

Its subcellular location is the cytoplasm. Functionally, the UvrABC repair system catalyzes the recognition and processing of DNA lesions. A damage recognition complex composed of 2 UvrA and 2 UvrB subunits scans DNA for abnormalities. Upon binding of the UvrA(2)B(2) complex to a putative damaged site, the DNA wraps around one UvrB monomer. DNA wrap is dependent on ATP binding by UvrB and probably causes local melting of the DNA helix, facilitating insertion of UvrB beta-hairpin between the DNA strands. Then UvrB probes one DNA strand for the presence of a lesion. If a lesion is found the UvrA subunits dissociate and the UvrB-DNA preincision complex is formed. This complex is subsequently bound by UvrC and the second UvrB is released. If no lesion is found, the DNA wraps around the other UvrB subunit that will check the other stand for damage. In Yersinia pestis bv. Antiqua (strain Antiqua), this protein is UvrABC system protein B.